The following is a 98-amino-acid chain: Co-chaperonin GroES (98 aa).

It belongs to the GroES chaperonin family. As to quaternary structure, heptamer of 7 subunits arranged in a ring. Interacts with the chaperonin GroEL.

The protein resides in the cytoplasm. Together with the chaperonin GroEL, plays an essential role in assisting protein folding. The GroEL-GroES system forms a nano-cage that allows encapsulation of the non-native substrate proteins and provides a physical environment optimized to promote and accelerate protein folding. GroES binds to the apical surface of the GroEL ring, thereby capping the opening of the GroEL channel. This chain is Co-chaperonin GroES, found in Neorickettsia sennetsu (strain ATCC VR-367 / Miyayama) (Ehrlichia sennetsu).